Consider the following 291-residue polypeptide: Probable S-adenosylmethionine-dependent methyltransferase CRG1 (291 aa).

This sequence belongs to the methyltransferase superfamily.

It localises to the cytoplasm. In terms of biological role, probable S-adenosylmethionine-dependent methyltransferase which mediates cantharidin resistance. The chain is Probable S-adenosylmethionine-dependent methyltransferase CRG1 (CRG1) from Saccharomyces cerevisiae (strain ATCC 204508 / S288c) (Baker's yeast).